Reading from the N-terminus, the 462-residue chain is Putative F-box protein At1g12855 (462 aa).

Residues 1–22 show a composition bias toward basic and acidic residues; the sequence is MESREDSFISKEKKSTMKKEKQ. Residues 1 to 59 form a disordered region; that stretch reads MESREDSFISKEKKSTMKKEKQAIASQRNRRRVIKNRGNGKRLIASLSQRKRRRIPRGR. Residues 28–40 show a composition bias toward basic residues; the sequence is RNRRRVIKNRGNG. Residues 65–110 enclose the F-box domain; the sequence is VFAPSSLPNDVVEEIFLRLPVKAIIQLKSLSKQWRSTIESRSFEER.

This Arabidopsis thaliana (Mouse-ear cress) protein is Putative F-box protein At1g12855.